The sequence spans 448 residues: Exodeoxyribonuclease 7 large subunit (448 aa).

Belongs to the XseA family. Heterooligomer composed of large and small subunits.

It is found in the cytoplasm. It carries out the reaction Exonucleolytic cleavage in either 5'- to 3'- or 3'- to 5'-direction to yield nucleoside 5'-phosphates.. Functionally, bidirectionally degrades single-stranded DNA into large acid-insoluble oligonucleotides, which are then degraded further into small acid-soluble oligonucleotides. The chain is Exodeoxyribonuclease 7 large subunit from Hamiltonella defensa subsp. Acyrthosiphon pisum (strain 5AT).